Consider the following 274-residue polypeptide: Tropomyosin (274 aa).

The interval 1 to 30 is disordered; it reads MKLEKDNAMDRADTLEQQNKEANIRAEKAE. The stretch at 1 to 274 forms a coiled coil; sequence MKLEKDNAMD…DQTFSELSGY (274 aa).

It belongs to the tropomyosin family. As to quaternary structure, homodimer.

Its function is as follows. Tropomyosin, in association with the troponin complex, plays a central role in the calcium dependent regulation of muscle contraction. The chain is Tropomyosin from Panulirus stimpsoni (Chinese spiny lobster).